The primary structure comprises 163 residues: Mating-type protein ALPHA2 (163 aa).

Positions I80 to T142 form a DNA-binding region, homeobox; TALE-type.

The protein belongs to the TALE/M-ATYP homeobox family.

The protein localises to the nucleus. Its function is as follows. Mating type proteins are sequence specific DNA-binding proteins that act as master switches in yeast differentiation by controlling gene expression in a cell type-specific fashion. The sequence is that of Mating-type protein ALPHA2 (MATALPHA2) from Pichia angusta (Yeast).